The sequence spans 181 residues: Peptide deformylase (181 aa).

Residues cysteine 99 and histidine 141 each contribute to the Fe cation site. The active site involves glutamate 142. Histidine 145 lines the Fe cation pocket.

This sequence belongs to the polypeptide deformylase family. Requires Fe(2+) as cofactor.

The enzyme catalyses N-terminal N-formyl-L-methionyl-[peptide] + H2O = N-terminal L-methionyl-[peptide] + formate. Removes the formyl group from the N-terminal Met of newly synthesized proteins. Requires at least a dipeptide for an efficient rate of reaction. N-terminal L-methionine is a prerequisite for activity but the enzyme has broad specificity at other positions. The protein is Peptide deformylase of Chlamydia trachomatis serovar A (strain ATCC VR-571B / DSM 19440 / HAR-13).